Reading from the N-terminus, the 862-residue chain is DNA mismatch repair protein MutS (862 aa).

ATP is bound at residue 613 to 620 (GPNMAGKS).

Belongs to the DNA mismatch repair MutS family.

In terms of biological role, this protein is involved in the repair of mismatches in DNA. It is possible that it carries out the mismatch recognition step. This protein has a weak ATPase activity. The chain is DNA mismatch repair protein MutS from Desulfitobacterium hafniense (strain Y51).